A 149-amino-acid polypeptide reads, in one-letter code: Basic phospholipase A2 homolog MitTx-beta (149 aa).

Positions 1-30 (MDKMNPAHLLVLAAVCVSLLGASSIPPQAL) are cleaved as a signal peptide. Intrachain disulfides connect Cys41–Cys100, Cys55–Cys148, Cys57–Cys73, Cys72–Cys130, Cys79–Cys123, Cys89–Cys116, and Cys109–Cys121.

Belongs to the phospholipase A2 family. Group I subfamily. K49 sub-subfamily. As to quaternary structure, heterodimer of an alpha (Kunitz-type) and a beta (phospholipase A2 homolog) chains; non-covalently-linked. As to expression, expressed by the venom gland.

The protein resides in the secreted. Heterodimer: MitTx, a heteromeric complex between Kunitz- and phospholipase-A2-like proteins, potently, persistently and selectively activates rat and chicken acid-sensing ion channel ASIC1. Both alternatively spliced rat isoforms ASIC1a and ASIC1b are activated, with a higher potency for ASIC1a (EC(50)=9.4 nM) vs ASIC1b (EC(50)=23 nM). The rat ASIC3 subtype is also sensitive to the heterodimer, but with a lower potency (EC(50)=830 nM). On rat ASIC2a, the toxin shows a very weak activation, but produces a remarkable potentiation (&gt;100-fold) of protons when the extracellular pH drops below neutrality. Moderate and weak activations are also observed on the heterotrimers Asic1a-Asic2a and Asic1a-Asic3 (expressed in CHO cells), respectively. The binding sites of the beta subunit of MitTx and the spider psalmotoxin-1 toxin overlap, explaining why these toxins are mutually exclusive. In vivo, the heterodimer elicits robust pain-related behavior in mice by activation of ASIC1 channels on capsaicin-sensitive nerve fibers. Functionally, monomer: does not have phospholipase A2 activity but may maintain some lipid-binding character from its PLA2 lineage, which could aid in effecting neuronal depolarization. The polypeptide is Basic phospholipase A2 homolog MitTx-beta (Micrurus tener tener (Texas coral snake)).